The chain runs to 221 residues: Leucyl/phenylalanyl-tRNA--protein transferase (221 aa).

Belongs to the L/F-transferase family.

The protein resides in the cytoplasm. The catalysed reaction is N-terminal L-lysyl-[protein] + L-leucyl-tRNA(Leu) = N-terminal L-leucyl-L-lysyl-[protein] + tRNA(Leu) + H(+). It catalyses the reaction N-terminal L-arginyl-[protein] + L-leucyl-tRNA(Leu) = N-terminal L-leucyl-L-arginyl-[protein] + tRNA(Leu) + H(+). It carries out the reaction L-phenylalanyl-tRNA(Phe) + an N-terminal L-alpha-aminoacyl-[protein] = an N-terminal L-phenylalanyl-L-alpha-aminoacyl-[protein] + tRNA(Phe). Functionally, functions in the N-end rule pathway of protein degradation where it conjugates Leu, Phe and, less efficiently, Met from aminoacyl-tRNAs to the N-termini of proteins containing an N-terminal arginine or lysine. This Phenylobacterium zucineum (strain HLK1) protein is Leucyl/phenylalanyl-tRNA--protein transferase.